A 262-amino-acid chain; its full sequence is Pyridoxine 5'-phosphate synthase (262 aa).

Asn-6 serves as a coordination point for 3-amino-2-oxopropyl phosphate. Position 8 to 9 (8 to 9 (DH)) interacts with 1-deoxy-D-xylulose 5-phosphate. Arg-17 provides a ligand contact to 3-amino-2-oxopropyl phosphate. Residue His-42 is the Proton acceptor of the active site. Arg-44 and His-49 together coordinate 1-deoxy-D-xylulose 5-phosphate. The active-site Proton acceptor is Glu-69. Thr-99 contributes to the 1-deoxy-D-xylulose 5-phosphate binding site. His-213 acts as the Proton donor in catalysis. 3-amino-2-oxopropyl phosphate is bound by residues Gly-214 and 235-236 (GH).

The protein belongs to the PNP synthase family. Homooctamer; tetramer of dimers.

Its subcellular location is the cytoplasm. It carries out the reaction 3-amino-2-oxopropyl phosphate + 1-deoxy-D-xylulose 5-phosphate = pyridoxine 5'-phosphate + phosphate + 2 H2O + H(+). It participates in cofactor biosynthesis; pyridoxine 5'-phosphate biosynthesis; pyridoxine 5'-phosphate from D-erythrose 4-phosphate: step 5/5. Catalyzes the complicated ring closure reaction between the two acyclic compounds 1-deoxy-D-xylulose-5-phosphate (DXP) and 3-amino-2-oxopropyl phosphate (1-amino-acetone-3-phosphate or AAP) to form pyridoxine 5'-phosphate (PNP) and inorganic phosphate. The protein is Pyridoxine 5'-phosphate synthase of Wolinella succinogenes (strain ATCC 29543 / DSM 1740 / CCUG 13145 / JCM 31913 / LMG 7466 / NCTC 11488 / FDC 602W) (Vibrio succinogenes).